A 115-amino-acid polypeptide reads, in one-letter code: Large ribosomal subunit protein bL19 (115 aa).

Belongs to the bacterial ribosomal protein bL19 family.

This protein is located at the 30S-50S ribosomal subunit interface and may play a role in the structure and function of the aminoacyl-tRNA binding site. The sequence is that of Large ribosomal subunit protein bL19 from Coxiella burnetii (strain CbuK_Q154) (Coxiella burnetii (strain Q154)).